A 361-amino-acid polypeptide reads, in one-letter code: Peptide chain release factor 1 (361 aa).

An N5-methylglutamine modification is found at Gln-235. Residues 284–306 form a disordered region; the sequence is SQQATAEAMTRKLQVGSGDRSQR.

The protein belongs to the prokaryotic/mitochondrial release factor family. Post-translationally, methylated by PrmC. Methylation increases the termination efficiency of RF1.

The protein localises to the cytoplasm. Its function is as follows. Peptide chain release factor 1 directs the termination of translation in response to the peptide chain termination codons UAG and UAA. The sequence is that of Peptide chain release factor 1 from Xylella fastidiosa (strain 9a5c).